The following is a 212-amino-acid chain: Thymidylate kinase (212 aa).

11–18 (GGEGVGKS) is a binding site for ATP.

This sequence belongs to the thymidylate kinase family.

It carries out the reaction dTMP + ATP = dTDP + ADP. Phosphorylation of dTMP to form dTDP in both de novo and salvage pathways of dTTP synthesis. The polypeptide is Thymidylate kinase (Chromohalobacter salexigens (strain ATCC BAA-138 / DSM 3043 / CIP 106854 / NCIMB 13768 / 1H11)).